Consider the following 287-residue polypeptide: Endolytic peptidoglycan transglycosylase RlpA (287 aa).

An N-terminal signal peptide occupies residues 1-25; the sequence is MKLKTGLNLTALLLFMISVAFPAQA. The SPOR domain occupies 209–284; the sequence is LKGTEFYCLK…ANNKPLIVYT (76 aa).

The protein belongs to the RlpA family.

Its function is as follows. Lytic transglycosylase with a strong preference for naked glycan strands that lack stem peptides. This Haemophilus influenzae (strain ATCC 51907 / DSM 11121 / KW20 / Rd) protein is Endolytic peptidoglycan transglycosylase RlpA.